A 372-amino-acid chain; its full sequence is NAD(P)H-quinone oxidoreductase subunit 1 (372 aa).

The next 8 membrane-spanning stretches (helical) occupy residues 31 to 51 (PLPM…VVWL), 65 to 85 (PEFI…KLVL), 97 to 117 (LLFT…YLIL), 128 to 148 (VGLG…GLLM), 176 to 196 (LALS…VDIV), 254 to 276 (FALF…AVLY), 304 to 324 (LIFA…LIFL), and 347 to 367 (FLLP…LAFP).

This sequence belongs to the complex I subunit 1 family. As to quaternary structure, NDH-1 is composed of at least 11 different subunits.

It is found in the cellular thylakoid membrane. It catalyses the reaction a plastoquinone + NADH + (n+1) H(+)(in) = a plastoquinol + NAD(+) + n H(+)(out). The catalysed reaction is a plastoquinone + NADPH + (n+1) H(+)(in) = a plastoquinol + NADP(+) + n H(+)(out). In terms of biological role, NDH-1 shuttles electrons from an unknown electron donor, via FMN and iron-sulfur (Fe-S) centers, to quinones in the respiratory and/or the photosynthetic chain. The immediate electron acceptor for the enzyme in this species is believed to be plastoquinone. Couples the redox reaction to proton translocation, and thus conserves the redox energy in a proton gradient. This Leptolyngbya boryana (Plectonema boryanum) protein is NAD(P)H-quinone oxidoreductase subunit 1.